Reading from the N-terminus, the 367-residue chain is Chorismate synthase (367 aa).

Position 48 (arginine 48) interacts with NADP(+). FMN is bound by residues 125–127 (RSS), glycine 283, 298–302 (KPTPS), and arginine 324.

The protein belongs to the chorismate synthase family. As to quaternary structure, homotetramer. The cofactor is FMNH2.

It catalyses the reaction 5-O-(1-carboxyvinyl)-3-phosphoshikimate = chorismate + phosphate. It functions in the pathway metabolic intermediate biosynthesis; chorismate biosynthesis; chorismate from D-erythrose 4-phosphate and phosphoenolpyruvate: step 7/7. Functionally, catalyzes the anti-1,4-elimination of the C-3 phosphate and the C-6 proR hydrogen from 5-enolpyruvylshikimate-3-phosphate (EPSP) to yield chorismate, which is the branch point compound that serves as the starting substrate for the three terminal pathways of aromatic amino acid biosynthesis. This reaction introduces a second double bond into the aromatic ring system. The protein is Chorismate synthase of Agathobacter rectalis (strain ATCC 33656 / DSM 3377 / JCM 17463 / KCTC 5835 / VPI 0990) (Eubacterium rectale).